The following is a 632-amino-acid chain: Extracellular metalloproteinase 2 (632 aa).

An N-terminal signal peptide occupies residues 1–19 (MHGLLLAGLAAALPLGVAG). Residues 20-244 (LPARQQSGLS…VHNVVDYVAS (225 aa)) constitute a propeptide that is removed on maturation. Asparagine 270 is a glycosylation site (N-linked (GlcNAc...) asparagine). Histidine 429 provides a ligand contact to Zn(2+). Residue glutamate 430 is part of the active site. Histidine 433 is a Zn(2+) binding site.

The protein belongs to the peptidase M36 family. Requires Zn(2+) as cofactor.

Its subcellular location is the secreted. In terms of biological role, secreted metalloproteinase probably acting as a virulence factor. This chain is Extracellular metalloproteinase 2 (MEP2), found in Arthroderma benhamiae (Trichophyton mentagrophytes).